We begin with the raw amino-acid sequence, 229 residues long: Cytochrome c oxidase subunit 2 (229 aa).

At 1–26 (MATWAQLNFQDAASPMMEQLHYFHDH) the chain is on the mitochondrial intermembrane side. Residues 27-48 (TMMVLVIITIMVAYIMGTMFFN) form a helical membrane-spanning segment. The Mitochondrial matrix portion of the chain corresponds to 49 to 62 (KDVNRYLLDGQKIE). The helical transmembrane segment at 63 to 82 (TEWTIVPVFVLVIIAMPSLR) threads the bilayer. Topologically, residues 83–229 (LLYLLDEVNE…INWIQNMSEA (147 aa)) are mitochondrial intermembrane. Residues His-161, Cys-196, Glu-198, Cys-200, His-204, and Met-207 each coordinate Cu cation. Position 198 (Glu-198) interacts with Mg(2+).

The protein belongs to the cytochrome c oxidase subunit 2 family. In terms of assembly, component of the cytochrome c oxidase (complex IV, CIV), a multisubunit enzyme composed of a catalytic core of 3 subunits and several supernumerary subunits. The complex exists as a monomer or a dimer and forms supercomplexes (SCs) in the inner mitochondrial membrane with ubiquinol-cytochrome c oxidoreductase (cytochrome b-c1 complex, complex III, CIII). Requires Cu cation as cofactor.

It localises to the mitochondrion inner membrane. The catalysed reaction is 4 Fe(II)-[cytochrome c] + O2 + 8 H(+)(in) = 4 Fe(III)-[cytochrome c] + 2 H2O + 4 H(+)(out). Component of the cytochrome c oxidase, the last enzyme in the mitochondrial electron transport chain which drives oxidative phosphorylation. The respiratory chain contains 3 multisubunit complexes succinate dehydrogenase (complex II, CII), ubiquinol-cytochrome c oxidoreductase (cytochrome b-c1 complex, complex III, CIII) and cytochrome c oxidase (complex IV, CIV), that cooperate to transfer electrons derived from NADH and succinate to molecular oxygen, creating an electrochemical gradient over the inner membrane that drives transmembrane transport and the ATP synthase. Cytochrome c oxidase is the component of the respiratory chain that catalyzes the reduction of oxygen to water. Electrons originating from reduced cytochrome c in the intermembrane space (IMS) are transferred via the dinuclear copper A center (CU(A)) of subunit 2 and heme A of subunit 1 to the active site in subunit 1, a binuclear center (BNC) formed by heme A3 and copper B (CU(B)). The BNC reduces molecular oxygen to 2 water molecules using 4 electrons from cytochrome c in the IMS and 4 protons from the mitochondrial matrix. The chain is Cytochrome c oxidase subunit 2 (COII) from Sympetrum striolatum (Common darter dragonfly).